A 447-amino-acid chain; its full sequence is MTKKIITLVGRPNVGKSTLFNRLSIRKKAIVHDLPGVTRDRKYTDGKIGSFEFLLIDTPGLEENPDNMGERLMGQTTQAILEADLICFMVDGKSGVLPDDKLLSNFVRKYNKHCILVVNKCEKAFDFDKEYYKLGFDSIVIISAEHGIGLIDLYDAIISKLSVEESIERNIADPFRGDCLQIVVSGRPNAGKSTFINAIINDERLLTGPEAGITRESIEVDWQYKNTHIKLIDTAGLRKKSTITASLEKLSTSDTINSIKFANTVILMIDALAHVKQQDFNIASHIVNEGRSIIIVVNKWDLVKESEKEAFQKEFYYQINTHLPQIKGVPVLFISAINKQNIEQVLDACLKIYKIWNKKITTNKLNKWLDFTTKIHPLPLQKCGRRVRIKYMTQIKTRPPTFKLFSNNPGKITDSYTRYLVNNMRDAFDMHGIPIRFTYVKNKNPYV.

2 EngA-type G domains span residues 4 to 165 (KIIT…SVEE) and 180 to 357 (LQIV…KIWN). Residues 10-17 (GRPNVGKS), 57-61 (DTPGL), 119-122 (NKCE), 186-193 (GRPNAGKS), 233-237 (DTAGL), and 298-301 (NKWD) each bind GTP. Residues 358–443 (KKITTNKLNK…PIRFTYVKNK (86 aa)) enclose the KH-like domain.

It belongs to the TRAFAC class TrmE-Era-EngA-EngB-Septin-like GTPase superfamily. EngA (Der) GTPase family. Associates with the 50S ribosomal subunit.

GTPase that plays an essential role in the late steps of ribosome biogenesis. In Rickettsia prowazekii (strain Madrid E), this protein is GTPase Der.